The following is a 94-amino-acid chain: C-C motif chemokine 26 (94 aa).

The signal sequence occupies residues 1–23 (MMGLSLASAVLLASLLSLHLGTA). 2 disulfide bridges follow: Cys-33/Cys-57 and Cys-34/Cys-73.

Belongs to the intercrine beta (chemokine CC) family. In terms of assembly, monomer. Ubiquitously expressed at low levels in various tissues including heart and ovary.

It is found in the secreted. In terms of biological role, chemoattractant for eosinophils and basophils. Acts as a ligand for C-C chemokine receptor CCR3 which triggers Ca(2+) mobilization in eosinophils. Also acts as a ligand for CX3C chemokine receptor CX3CR1, inducing cell chemotaxis. The sequence is that of C-C motif chemokine 26 from Homo sapiens (Human).